Here is a 352-residue protein sequence, read N- to C-terminus: N-acetyl-gamma-glutamyl-phosphate reductase (352 aa).

Residue C155 is part of the active site.

It belongs to the NAGSA dehydrogenase family. Type 1 subfamily.

It localises to the cytoplasm. The catalysed reaction is N-acetyl-L-glutamate 5-semialdehyde + phosphate + NADP(+) = N-acetyl-L-glutamyl 5-phosphate + NADPH + H(+). It participates in amino-acid biosynthesis; L-arginine biosynthesis; N(2)-acetyl-L-ornithine from L-glutamate: step 3/4. Catalyzes the NADPH-dependent reduction of N-acetyl-5-glutamyl phosphate to yield N-acetyl-L-glutamate 5-semialdehyde. The chain is N-acetyl-gamma-glutamyl-phosphate reductase from Rippkaea orientalis (strain PCC 8801 / RF-1) (Cyanothece sp. (strain PCC 8801)).